We begin with the raw amino-acid sequence, 283 residues long: Movement protein (283 aa).

The protein belongs to the cucumovirus movement protein family.

It is found in the host cell junction. It localises to the host plasmodesma. Transports viral genome to neighboring plant cells directly through plasmosdesmata, without any budding. The movement protein allows efficient cell to cell propagation, by bypassing the host cell wall barrier. Acts by forming a tubular structure at the host plasmodesmata, enlarging it enough to allow free passage of virion capsids. The chain is Movement protein from Cucumis sativus (Cucumber).